Reading from the N-terminus, the 514-residue chain is Periplasmic [NiFeSe] hydrogenase large subunit (514 aa).

Position 52 (Glu52) interacts with Fe cation. Ni(2+) contacts are provided by Cys71 and Cys74. The Fe cation site is built by Cys74 and Ile445. Ni(2+) contacts are provided by Sec493 and Cys496. Residue Sec493 is a non-standard amino acid, selenocysteine. Residues Cys496 and His499 each contribute to the Fe cation site.

The protein belongs to the [NiFe]/[NiFeSe] hydrogenase large subunit family. Heterodimer of a large and a small subunit. Fe cation serves as cofactor. Requires Ni(2+) as cofactor.

It localises to the periplasm. It carries out the reaction H2 + A = AH2. This is Periplasmic [NiFeSe] hydrogenase large subunit from Desulfomicrobium baculatum (Desulfovibrio baculatus).